A 244-amino-acid polypeptide reads, in one-letter code: Lipoprotein-releasing system ATP-binding protein LolD (244 aa).

In terms of domain architecture, ABC transporter spans 19 to 244 (IRAEALAKTY…KLRELAPSAV (226 aa)). 55–62 (GASGAGKS) serves as a coordination point for ATP.

It belongs to the ABC transporter superfamily. Lipoprotein translocase (TC 3.A.1.125) family. The complex is composed of two ATP-binding proteins (LolD) and two transmembrane proteins (LolC and LolE).

It is found in the cell inner membrane. Functionally, part of the ABC transporter complex LolCDE involved in the translocation of mature outer membrane-directed lipoproteins, from the inner membrane to the periplasmic chaperone, LolA. Responsible for the formation of the LolA-lipoprotein complex in an ATP-dependent manner. The polypeptide is Lipoprotein-releasing system ATP-binding protein LolD (Xanthomonas euvesicatoria pv. vesicatoria (strain 85-10) (Xanthomonas campestris pv. vesicatoria)).